Consider the following 150-residue polypeptide: Large ribosomal subunit protein bL9 (150 aa).

This sequence belongs to the bacterial ribosomal protein bL9 family.

In terms of biological role, binds to the 23S rRNA. The protein is Large ribosomal subunit protein bL9 of Baumannia cicadellinicola subsp. Homalodisca coagulata.